The following is a 225-amino-acid chain: Probable septum site-determining protein MinC (225 aa).

Belongs to the MinC family. In terms of assembly, interacts with MinD and FtsZ.

Functionally, cell division inhibitor that blocks the formation of polar Z ring septums. Rapidly oscillates between the poles of the cell to destabilize FtsZ filaments that have formed before they mature into polar Z rings. Prevents FtsZ polymerization. This Listeria welshimeri serovar 6b (strain ATCC 35897 / DSM 20650 / CCUG 15529 / CIP 8149 / NCTC 11857 / SLCC 5334 / V8) protein is Probable septum site-determining protein MinC.